An 83-amino-acid chain; its full sequence is MSSGGLLLLLGLLTLWEVLTPVSSKDRPNFCKLPAETGRCNAKIPRFYYNPRQHQCIEFLYGGCGGNANNFKTIKECESTCAA.

The first 24 residues, 1–24, serve as a signal peptide directing secretion; it reads MSSGGLLLLLGLLTLWEVLTPVSS. The region spanning 31–81 is the BPTI/Kunitz inhibitor domain; the sequence is CKLPAETGRCNAKIPRFYYNPRQHQCIEFLYGGCGGNANNFKTIKECESTC. Cystine bridges form between C31/C81, C40/C64, and C56/C77.

This sequence belongs to the venom Kunitz-type family. Expressed by the venom gland.

It is found in the secreted. In terms of biological role, serine protease inhibitor. Does not inhibit plasmin, and does not reduce blood loss in the mouse tail vein blood loss model. The sequence is that of Kunitz-type serine protease inhibitor textilinin-3 from Pseudonaja textilis textilis (Eastern brown snake).